Consider the following 333-residue polypeptide: S-adenosylmethionine-dependent nucleotide dehydratase (333 aa).

Positions 1–239 (MNIKTIVINW…SAPQKQNNVI (239 aa)) constitute a Radical SAM core domain. Residues cysteine 16, cysteine 20, and cysteine 23 each coordinate [4Fe-4S] cluster.

Belongs to the radical SAM superfamily. Viperin family. The cofactor is [4Fe-4S] cluster.

The enzyme catalyses GTP + AH2 + S-adenosyl-L-methionine = 3'-deoxy-3',4'-didehydro-GTP + 5'-deoxyadenosine + L-methionine + A + H2O + H(+). Functionally, expression of pVip56 in E.coli (strain MG1655) confers resistance to phage P1; has no effect against T7. Catalyzes the conversion of guanosine triphosphate (GTP) to 3'-deoxy-3',4'-didehydro-GTP (ddhGTP), probably via a SAM-dependent radical mechanism. The modified nucleotide represses transcription from T7 RNA polymerase-directed genes (possibly by acting as chain terminators), strongly suggesting these nucleotides block viral polymerase transcription. How this protein allows bacteria to resist viruses that do not encode their own RNA polymerase (such as lambda, P1) is unknown. In Fibrobacter sp. (strain UWH6), this protein is S-adenosylmethionine-dependent nucleotide dehydratase.